A 485-amino-acid chain; its full sequence is tRNA-2-methylthio-N(6)-dimethylallyladenosine synthase (485 aa).

In terms of domain architecture, MTTase N-terminal spans 37–154 (GKLYIKTHGC…LPELIRARRE (118 aa)). 6 residues coordinate [4Fe-4S] cluster: cysteine 46, cysteine 83, cysteine 117, cysteine 191, cysteine 195, and cysteine 198. In terms of domain architecture, Radical SAM core spans 177–416 (RADGPSAFVS…HINAHAAGIS (240 aa)). The region spanning 417 to 480 (QRMVGSVQRV…SNSLRGRIQL (64 aa)) is the TRAM domain.

The protein belongs to the methylthiotransferase family. MiaB subfamily. In terms of assembly, monomer. The cofactor is [4Fe-4S] cluster.

The protein resides in the cytoplasm. It carries out the reaction N(6)-dimethylallyladenosine(37) in tRNA + (sulfur carrier)-SH + AH2 + 2 S-adenosyl-L-methionine = 2-methylsulfanyl-N(6)-dimethylallyladenosine(37) in tRNA + (sulfur carrier)-H + 5'-deoxyadenosine + L-methionine + A + S-adenosyl-L-homocysteine + 2 H(+). Catalyzes the methylthiolation of N6-(dimethylallyl)adenosine (i(6)A), leading to the formation of 2-methylthio-N6-(dimethylallyl)adenosine (ms(2)i(6)A) at position 37 in tRNAs that read codons beginning with uridine. This chain is tRNA-2-methylthio-N(6)-dimethylallyladenosine synthase, found in Xanthomonas campestris pv. campestris (strain 8004).